The following is a 65-amino-acid chain: MEVGQAASGTDGVRERRGSSAARRRSQDEPVQSGMNGIPKHSYWLDLWLFILFDLALFIFVYLLP.

Met1 bears the N-acetylmethionine mark. The interval 1-38 (MEVGQAASGTDGVRERRGSSAARRRSQDEPVQSGMNGI) is disordered. A phosphoserine mark is found at Ser19 and Ser26. A helical transmembrane segment spans residues 44 to 64 (WLDLWLFILFDLALFIFVYLL).

In terms of assembly, homooligomer. Can also form heterooligomers with other sarcoplasmic/endoplasmic reticulum calcium ATPase (SERCA) regulators ERLN, PLN, SLN and STRIT1/DWORF. Monomer. Interacts as a monomer with ATP2A2/SERCA2; the interaction results in inhibition of ATP2A2 Ca(2+) affinity.

The protein localises to the endoplasmic reticulum membrane. Inhibits the activity of the calcium ATPases ATP2A2/SERCA2 and ATP2A3/SERCA3 by decreasing their apparent affinity for Ca(2+). This is Sarcoplasmic/endoplasmic reticulum calcium ATPase regulator ARLN (Arln) from Rattus norvegicus (Rat).